We begin with the raw amino-acid sequence, 447 residues long: Asparagine--tRNA ligase (447 aa).

The protein belongs to the class-II aminoacyl-tRNA synthetase family. Homodimer.

The protein resides in the cytoplasm. It catalyses the reaction tRNA(Asn) + L-asparagine + ATP = L-asparaginyl-tRNA(Asn) + AMP + diphosphate + H(+). This is Asparagine--tRNA ligase from Lactococcus lactis subsp. cremoris (strain MG1363).